Reading from the N-terminus, the 274-residue chain is Large ribosomal subunit protein uL2cz/uL2cy (274 aa).

Disordered stretches follow at residues 1–22 (MAIHLYKTSTPSTRNGAVDSQV) and 225–252 (PVDHPHGGGEGRAPIGRKKPVTPWGYPA).

The protein belongs to the universal ribosomal protein uL2 family. Part of the 50S ribosomal subunit.

It is found in the plastid. Its subcellular location is the chloroplast. In Barbarea verna (Land cress), this protein is Large ribosomal subunit protein uL2cz/uL2cy (rpl2-A).